The following is a 66-amino-acid chain: Cold shock-like protein CspD (66 aa).

A CSD domain is found at 4-63 (GKVKWFNSEKGFGFIEVEGGDDVFVHFSAIQGDGFKTLEEGQEVSFEIVEGNRGPQAANV).

As to quaternary structure, homodimer.

It is found in the cytoplasm. The polypeptide is Cold shock-like protein CspD (cspD) (Bacillus anthracis).